The chain runs to 257 residues: MSNQVIVTNISPEVTEKQISDFFSFCGKVSNISTEKSGETQTAKIQFERPSATKTALLLQDALLGQNKIQITSEDGGAASTTDQGGAGGDQAARQEDKPRSAIISELLSRGYHLSDVTLEKSIQLDQSYGVSSKFKGILESALSGVRSVNERYHVTEKANEVDNKFAISDKLNRTSSLVSTYFHKALETAAGTSAGQKVQNAYEDGKNQLLGIHNEARRLADAKNQAEGTASPASSTPTAPAEKEPTAPTTESKTTE.

One can recognise an RRM domain in the interval 3 to 76 (NQVIVTNISP…NKIQITSEDG (74 aa)). The tract at residues 74–99 (EDGGAASTTDQGGAGGDQAARQEDKP) is disordered. Residues 75 to 84 (DGGAASTTDQ) show a composition bias toward low complexity. Residues Ser-132 and Ser-177 each carry the phosphoserine modification. Positions 217-257 (ARRLADAKNQAEGTASPASSTPTAPAEKEPTAPTTESKTTE) are disordered. Thr-230 carries the post-translational modification Phosphothreonine. Over residues 230 to 257 (TASPASSTPTAPAEKEPTAPTTESKTTE) the composition is skewed to low complexity. Phosphoserine is present on residues Ser-232 and Ser-235.

The polypeptide is Protein vip1 (vip1) (Schizosaccharomyces pombe (strain 972 / ATCC 24843) (Fission yeast)).